A 351-amino-acid chain; its full sequence is MRFTTLSTAFLALAQNVYAFPIESDLSALDVTLSQVSDTRIKAVVKNTGAENVTFVHLNFFRDSAPVKKVSVYRENNEVVFDGIKRRFQLQGLASESLTTLEAGEVLEDEFDIATTTDLSSGGAITLRSNGLVPVVKDGAVTGYLPYSSNDLKLNIDGAKASTVTKALKPLDRRTKETCSNASRKSALEKALSNTVKLANAAATAARSGSASKFSEYFKTTSSSTRSVVAARLEAVAKEAQSASSGSTTYYCSDTLGYCETNVLAYTLPARNIIANCDIYYSYLPALAGTCHQQDQATTTLHEFTHAPGVYSPGTDDLGYGYSAATSLSSSQAVLNADSYALYANAINLGC.

Residues 1–19 (MRFTTLSTAFLALAQNVYA) form the signal peptide. The propeptide occupies 20–174 (FPIESDLSAL…TKALKPLDRR (155 aa)). N-linked (GlcNAc...) asparagine glycans are attached at residues asparagine 52 and asparagine 181. Histidine 302 is a binding site for Zn(2+). Glutamate 303 is a catalytic residue. Zn(2+) is bound by residues histidine 306 and aspartate 317.

This sequence belongs to the peptidase M35 family. Zn(2+) serves as cofactor.

The enzyme catalyses Preferential cleavage of bonds with hydrophobic residues in P1'. Also 3-Asn-|-Gln-4 and 8-Gly-|-Ser-9 bonds in insulin B chain.. This Penicillium citrinum protein is Penicillolysin (plnC).